Here is a 104-residue protein sequence, read N- to C-terminus: Flagellar hook-basal body complex protein FliE (104 aa).

It belongs to the FliE family.

It is found in the bacterial flagellum basal body. The chain is Flagellar hook-basal body complex protein FliE from Escherichia coli (strain SE11).